A 493-amino-acid polypeptide reads, in one-letter code: BICD family-like cargo adapter 2 (493 aa).

2 coiled-coil regions span residues 56–275 and 365–431; these read ELGK…ELHM and MQHV…LLST.

Belongs to the BICDR family.

The polypeptide is BICD family-like cargo adapter 2 (bicdl2) (Xenopus laevis (African clawed frog)).